The chain runs to 100 residues: Urease subunit gamma (100 aa).

Belongs to the urease gamma subunit family. Heterotrimer of UreA (gamma), UreB (beta) and UreC (alpha) subunits. Three heterotrimers associate to form the active enzyme.

It is found in the cytoplasm. The enzyme catalyses urea + 2 H2O + H(+) = hydrogencarbonate + 2 NH4(+). It functions in the pathway nitrogen metabolism; urea degradation; CO(2) and NH(3) from urea (urease route): step 1/1. This is Urease subunit gamma from Mycobacterium bovis (strain ATCC BAA-935 / AF2122/97).